A 376-amino-acid chain; its full sequence is Succinyl-diaminopimelate desuccinylase (376 aa).

Histidine 66 is a binding site for Zn(2+). Residue aspartate 68 is part of the active site. Aspartate 99 serves as a coordination point for Zn(2+). Residue glutamate 133 is the Proton acceptor of the active site. Zn(2+) contacts are provided by glutamate 134, glutamate 162, and histidine 349.

Belongs to the peptidase M20A family. DapE subfamily. Homodimer. The cofactor is Zn(2+). Requires Co(2+) as cofactor.

It carries out the reaction N-succinyl-(2S,6S)-2,6-diaminopimelate + H2O = (2S,6S)-2,6-diaminopimelate + succinate. The protein operates within amino-acid biosynthesis; L-lysine biosynthesis via DAP pathway; LL-2,6-diaminopimelate from (S)-tetrahydrodipicolinate (succinylase route): step 3/3. Functionally, catalyzes the hydrolysis of N-succinyl-L,L-diaminopimelic acid (SDAP), forming succinate and LL-2,6-diaminopimelate (DAP), an intermediate involved in the bacterial biosynthesis of lysine and meso-diaminopimelic acid, an essential component of bacterial cell walls. This is Succinyl-diaminopimelate desuccinylase from Buchnera aphidicola subsp. Cinara cedri (strain Cc).